The primary structure comprises 488 residues: Ribulose bisphosphate carboxylase large chain (488 aa).

Substrate is bound by residues Asn-127 and Thr-177. The active-site Proton acceptor is the Lys-179. Residue Lys-181 participates in substrate binding. Mg(2+)-binding residues include Lys-205, Asp-207, and Glu-208. Lys-205 is subject to N6-carboxylysine. His-297 (proton acceptor) is an active-site residue. 3 residues coordinate substrate: Arg-298, His-330, and Ser-382.

Belongs to the RuBisCO large chain family. Type I subfamily. Heterohexadecamer of 8 large chains and 8 small chains. It depends on Mg(2+) as a cofactor.

Its subcellular location is the plastid. The protein resides in the chloroplast. It carries out the reaction 2 (2R)-3-phosphoglycerate + 2 H(+) = D-ribulose 1,5-bisphosphate + CO2 + H2O. The enzyme catalyses D-ribulose 1,5-bisphosphate + O2 = 2-phosphoglycolate + (2R)-3-phosphoglycerate + 2 H(+). Its function is as follows. RuBisCO catalyzes two reactions: the carboxylation of D-ribulose 1,5-bisphosphate, the primary event in carbon dioxide fixation, as well as the oxidative fragmentation of the pentose substrate in the photorespiration process. Both reactions occur simultaneously and in competition at the same active site. The protein is Ribulose bisphosphate carboxylase large chain of Pylaiella littoralis (Seaweed).